We begin with the raw amino-acid sequence, 116 residues long: U16-barytoxin-Tl1f (116 aa).

The N-terminal stretch at 1 to 20 (MKTIIVFLSLLVLATKFGDA) is a signal peptide. A propeptide spanning residues 21–74 (NEGVNQEQMKEVIQNEFREDFLNEMAAMSLLQQLEAIESTLLEKEADRNSRQKR) is cleaved from the precursor. Disulfide bonds link C75-C90, C82-C95, and C89-C110. Residue N85 is glycosylated (N-linked (GlcNAc...) asparagine).

This sequence belongs to the neurotoxin 14 (magi-1) family. 06 (ICK-Trit) subfamily. As to expression, expressed by the venom gland.

It is found in the secreted. Ion channel inhibitor. The polypeptide is U16-barytoxin-Tl1f (Trittame loki (Brush-footed trapdoor spider)).